The primary structure comprises 382 residues: Alkanesulfonate monooxygenase (382 aa).

It belongs to the SsuD family.

The catalysed reaction is an alkanesulfonate + FMNH2 + O2 = an aldehyde + FMN + sulfite + H2O + 2 H(+). In terms of biological role, catalyzes the desulfonation of aliphatic sulfonates. This is Alkanesulfonate monooxygenase from Pseudomonas putida (strain W619).